Consider the following 314-residue polypeptide: BRCA2 and CDKN1A-interacting protein (314 aa).

The tract at residues 1–56 (MASRSKRRAVESGVPQPPDPPVQRDEEEEKEVENEDEDDDDSDKEKDEEDEVIDEE) is disordered. A compositionally biased stretch (acidic residues) spans 25 to 56 (DEEEEKEVENEDEDDDDSDKEKDEEDEVIDEE). 2 positions are modified to phosphoserine: S42 and S112. The tract at residues 59 to 167 (IEFEAYSLSD…EKSMVEQLDK (109 aa)) is interaction with BRCA2. The interaction with CDKN1A stretch occupies residues 161–259 (MVEQLDKFLN…NAEEEFFYEK (99 aa)). Residue S281 is modified to Phosphoserine.

Belongs to the BCP1 family. As to quaternary structure, interacts with BRCA2, CDKN1A and MTDH/LYRIC. Isoform 2/alpha, but not isoform 1/beta, interacts with DCTN1/p150-glued and ACTR1A/ARP1. Both isoform 1 and isoform 2 interact with alpha-, beta- and gamma-tubulins. Interacts with TENT5C; the interaction has no effect on TENT5C poly(A) polymerase function. In terms of tissue distribution, expressed at high levels in testis and skeletal muscle and at lower levels in brain, heart, kidney, liver, lung, ovary, pancreas, placenta, and spleen.

Its subcellular location is the nucleus. The protein localises to the cytoplasm. It localises to the cytoskeleton. It is found in the microtubule organizing center. The protein resides in the centrosome. Its subcellular location is the centriole. The protein localises to the spindle pole. Its function is as follows. During interphase, required for microtubule organizing and anchoring activities. During mitosis, required for the organization and stabilization of the spindle pole. Isoform 2/alpha is particularly important for the regulation of microtubule anchoring, microtubule stability, spindle architecture and spindle orientation, compared to isoform 1/beta. May promote cell cycle arrest by enhancing the inhibition of CDK2 activity by CDKN1A. May be required for repair of DNA damage by homologous recombination in conjunction with BRCA2. May not be involved in non-homologous end joining (NHEJ). The protein is BRCA2 and CDKN1A-interacting protein (BCCIP) of Homo sapiens (Human).